Here is a 689-residue protein sequence, read N- to C-terminus: Glycine--tRNA ligase beta subunit (689 aa).

Belongs to the class-II aminoacyl-tRNA synthetase family. In terms of assembly, tetramer of two alpha and two beta subunits.

Its subcellular location is the cytoplasm. The catalysed reaction is tRNA(Gly) + glycine + ATP = glycyl-tRNA(Gly) + AMP + diphosphate. The protein is Glycine--tRNA ligase beta subunit of Coxiella burnetii (strain RSA 331 / Henzerling II).